The sequence spans 1279 residues: ATP-dependent helicase/nuclease subunit A (1279 aa).

The region spanning 4 to 499 (TKWTDEQRQA…VKLFKNFRSR (496 aa)) is the UvrD-like helicase ATP-binding domain. An ATP-binding site is contributed by 25 to 32 (AGAGAGKT). The UvrD-like helicase C-terminal domain occupies 526–853 (EEALKVGASY…RIMSIHKSKG (328 aa)).

The protein belongs to the helicase family. AddA subfamily. In terms of assembly, heterodimer of AddA and AddB/RexB. Requires Mg(2+) as cofactor.

It carries out the reaction Couples ATP hydrolysis with the unwinding of duplex DNA by translocating in the 3'-5' direction.. The catalysed reaction is ATP + H2O = ADP + phosphate + H(+). Functionally, the heterodimer acts as both an ATP-dependent DNA helicase and an ATP-dependent, dual-direction single-stranded exonuclease. Recognizes the chi site generating a DNA molecule suitable for the initiation of homologous recombination. The AddA nuclease domain is required for chi fragment generation; this subunit has the helicase and 3' -&gt; 5' nuclease activities. This is ATP-dependent helicase/nuclease subunit A from Clostridium botulinum (strain Okra / Type B1).